The primary structure comprises 218 residues: MQADFWHARWANNQIGFHLDEINPYLMRHLSRLRLQAGEQILVPLCGKTLDLAWLAAQGLEVLGVELSEKAVSDFFEEHDLRPEIDQLDGFRRYRVAGITLLQGDFFALQAEHLAQCRAFYDRAALIALPPEMRERYAGHLQAVLPTRSLGLLVTIDYPQAEMAGPPFAVPDEEVRGYYAGGWRIEELERGDVLGVNWKFLERGVSWLDEAVYLLERG.

S-adenosyl-L-methionine is bound by residues Trp-10, Leu-45, Glu-66, and Arg-123.

Belongs to the class I-like SAM-binding methyltransferase superfamily. TPMT family.

The protein resides in the cytoplasm. It catalyses the reaction S-adenosyl-L-methionine + a thiopurine = S-adenosyl-L-homocysteine + a thiopurine S-methylether.. The chain is Thiopurine S-methyltransferase from Pseudomonas aeruginosa (strain LESB58).